The sequence spans 424 residues: 5,5'-dehydrodivanillate O-demethylase oxygenase subunit (424 aa).

The Rieske domain maps to 27–135; the sequence is WHPIGGESEF…VRALGGLLWA (109 aa). Residues cysteine 68, histidine 70, cysteine 87, and histidine 90 each coordinate [2Fe-2S] cluster. Fe cation-binding residues include histidine 181, histidine 186, and aspartate 306.

This sequence belongs to the bacterial ring-hydroxylating dioxygenase alpha subunit family. In terms of assembly, homotrimer. The three-component monooxygenase is composed of an oxygenase (LigXa), a ferredoxin (LigXc) and a ferredoxin reductase (LigXd). [2Fe-2S] cluster is required as a cofactor. Requires Fe cation as cofactor.

It carries out the reaction 5,5'-dehydrodivanillate + NADH + O2 + H(+) = 2,2',3-trihydroxy-3'-methoxy-5,5'-dicarboxybiphenyl + formaldehyde + NAD(+) + H2O. Involved in the catabolism of 5,5'-dehydrodivanillate (DDVA), an intermediate in the biodegradation of lignin. Part of a three-component monooxygenase that catalyzes the O-demethylation of DDVA, leading to the formation of 2,2',3-trihydroxy-3'-methoxy-5,5'-dicarboxybiphenyl (OH-DDVA). This is 5,5'-dehydrodivanillate O-demethylase oxygenase subunit from Sphingobium sp. (strain NBRC 103272 / SYK-6).